An 864-amino-acid polypeptide reads, in one-letter code: N-alpha-acetyltransferase 16, NatA auxiliary subunit (864 aa).

TPR repeat units follow at residues 46 to 79 (GETLAMKGLILNCLGKREEAYEFVRKGLRSDVRS), 80 to 113 (HVCWHVYGLLQRSDKKYDEAIKCYRNALKLDKDN), 148 to 184 (RASWIGYAIAYHLLKDYDTALKLLEEFRQTQQVPPNK), 224 to 257 (LLVEEIKGEMLLKLGRLKEASEVFRNLIDWNAEN), 374 to 407 (IWVQYFLAQHYDKLGQYFLALEYINAVIASTPTL), 408 to 441 (IELFYMKAKIYKHMGNLKEAAQWMDEAQSLDTAD), and 485 to 514 (MWFETECISAYQRLGRYGDALKKCHEVERH). The interval 594 to 646 (KMLSKQRRAQKKAKVEEERKHTERERQQKNQKKKREEEEEVTSGHKEELIPEK) is disordered. Basic residues predominate over residues 595–605 (MLSKQRRAQKK). Basic and acidic residues-rich tracts occupy residues 606–621 (AKVEEERKHTERERQQ) and 635–646 (TSGHKEELIPEK).

As to quaternary structure, component of the N-terminal acetyltransferase A (NatA) complex composed of NAA10 and NAA16. In terms of tissue distribution, highest levels in the kidney and testes. Moderate expression in the liver, thymus and skin.

In terms of biological role, auxillary subunit of the N-terminal acetyltransferase A (NatA) complex which displays alpha (N-terminal) acetyltransferase activity. This is N-alpha-acetyltransferase 16, NatA auxiliary subunit (Naa16) from Mus musculus (Mouse).